The primary structure comprises 153 residues: MSQDHSVSKRLQSELMNLMMGPSPGISAFPDGDNIFNWIGTIQGAKDTVYEQMEFKMSLKFPTDYPYKPPTVKFETQCFHPNVDNNGNICLDILKDKWSPVYNVRSLLISIQSLLGEPNNESPLNSYAASLWSNQDEYKKVLDKRYQEATSRP.

Residues 6 to 153 form the UBC core domain; it reads SVSKRLQSEL…KRYQEATSRP (148 aa). The active-site Glycyl thioester intermediate is cysteine 90.

The protein belongs to the ubiquitin-conjugating enzyme family. In terms of assembly, component of the APC/C complex. Post-translationally, autoubiquitinated by the APC/C complex, leading to its degradation by the proteasome.

The enzyme catalyses S-ubiquitinyl-[E1 ubiquitin-activating enzyme]-L-cysteine + [E2 ubiquitin-conjugating enzyme]-L-cysteine = [E1 ubiquitin-activating enzyme]-L-cysteine + S-ubiquitinyl-[E2 ubiquitin-conjugating enzyme]-L-cysteine.. Its pathway is protein modification; protein ubiquitination. Catalyzes the covalent attachment of ubiquitin to other proteins. Acts as an essential factor of the anaphase promoting complex/cyclosome (APC/C), a cell cycle-regulated ubiquitin ligase that controls progression through mitosis. Acts by initiating polyubiquitin chains on APC/C substrates, leading to the degradation of APC/C substrates by the proteasome and promoting mitotic exit. This Dictyostelium discoideum (Social amoeba) protein is Probable ubiquitin-conjugating enzyme E2 C (ube2c).